The sequence spans 156 residues: 6,7-dimethyl-8-ribityllumazine synthase (156 aa).

5-amino-6-(D-ribitylamino)uracil-binding positions include phenylalanine 22, 57-59, and 81-83; these read AVE and TVI. Residue 86–87 participates in (2S)-2-hydroxy-3-oxobutyl phosphate binding; the sequence is GT. Histidine 89 functions as the Proton donor in the catalytic mechanism. Residue phenylalanine 114 participates in 5-amino-6-(D-ribitylamino)uracil binding. Residue arginine 128 coordinates (2S)-2-hydroxy-3-oxobutyl phosphate.

Belongs to the DMRL synthase family. Forms an icosahedral capsid composed of 60 subunits, arranged as a dodecamer of pentamers.

The catalysed reaction is (2S)-2-hydroxy-3-oxobutyl phosphate + 5-amino-6-(D-ribitylamino)uracil = 6,7-dimethyl-8-(1-D-ribityl)lumazine + phosphate + 2 H2O + H(+). It functions in the pathway cofactor biosynthesis; riboflavin biosynthesis; riboflavin from 2-hydroxy-3-oxobutyl phosphate and 5-amino-6-(D-ribitylamino)uracil: step 1/2. Its function is as follows. Catalyzes the formation of 6,7-dimethyl-8-ribityllumazine by condensation of 5-amino-6-(D-ribitylamino)uracil with 3,4-dihydroxy-2-butanone 4-phosphate. This is the penultimate step in the biosynthesis of riboflavin. This Vibrio campbellii (strain ATCC BAA-1116) protein is 6,7-dimethyl-8-ribityllumazine synthase.